We begin with the raw amino-acid sequence, 346 residues long: D-alanine--D-alanine ligase (346 aa).

Residues 125-325 (KRIWRSEGLP…YPALCLEVLR (201 aa)) form the ATP-grasp domain. Position 151-206 (151-206 (FAALGSPMIVKPDREGSTIGLTKVTQIEQCGAAYALAARHDAMVLCEQFVKGDEVT)) interacts with ATP. Residues Asp278, Glu292, and Asn294 each contribute to the Mg(2+) site.

The protein belongs to the D-alanine--D-alanine ligase family. The cofactor is Mg(2+). Requires Mn(2+) as cofactor.

It localises to the cytoplasm. The enzyme catalyses 2 D-alanine + ATP = D-alanyl-D-alanine + ADP + phosphate + H(+). Its pathway is cell wall biogenesis; peptidoglycan biosynthesis. Functionally, cell wall formation. The polypeptide is D-alanine--D-alanine ligase (Albidiferax ferrireducens (strain ATCC BAA-621 / DSM 15236 / T118) (Rhodoferax ferrireducens)).